Consider the following 311-residue polypeptide: Aspartate carbamoyltransferase catalytic subunit (311 aa).

Carbamoyl phosphate is bound by residues Arg59 and Thr60. Lys87 is a binding site for L-aspartate. Residues Arg109, His139, and Gln142 each coordinate carbamoyl phosphate. L-aspartate contacts are provided by Arg172 and Arg224. The carbamoyl phosphate site is built by Ala265 and Pro266.

The protein belongs to the aspartate/ornithine carbamoyltransferase superfamily. ATCase family. As to quaternary structure, heterododecamer (2C3:3R2) of six catalytic PyrB chains organized as two trimers (C3), and six regulatory PyrI chains organized as three dimers (R2).

It catalyses the reaction carbamoyl phosphate + L-aspartate = N-carbamoyl-L-aspartate + phosphate + H(+). It participates in pyrimidine metabolism; UMP biosynthesis via de novo pathway; (S)-dihydroorotate from bicarbonate: step 2/3. In terms of biological role, catalyzes the condensation of carbamoyl phosphate and aspartate to form carbamoyl aspartate and inorganic phosphate, the committed step in the de novo pyrimidine nucleotide biosynthesis pathway. The chain is Aspartate carbamoyltransferase catalytic subunit from Streptococcus pyogenes serotype M1.